A 264-amino-acid polypeptide reads, in one-letter code: Tryptophan synthase alpha chain (264 aa).

Residues glutamate 49 and aspartate 60 each act as proton acceptor in the active site.

The protein belongs to the TrpA family. Tetramer of two alpha and two beta chains.

The enzyme catalyses (1S,2R)-1-C-(indol-3-yl)glycerol 3-phosphate + L-serine = D-glyceraldehyde 3-phosphate + L-tryptophan + H2O. It functions in the pathway amino-acid biosynthesis; L-tryptophan biosynthesis; L-tryptophan from chorismate: step 5/5. Its function is as follows. The alpha subunit is responsible for the aldol cleavage of indoleglycerol phosphate to indole and glyceraldehyde 3-phosphate. This Synechocystis sp. (strain ATCC 27184 / PCC 6803 / Kazusa) protein is Tryptophan synthase alpha chain.